The chain runs to 264 residues: Thymidylate synthase (264 aa).

Arginine 21 lines the dUMP pocket. Histidine 51 provides a ligand contact to (6R)-5,10-methylene-5,6,7,8-tetrahydrofolate. DUMP is bound at residue 126 to 127; that stretch reads RR. Catalysis depends on cysteine 146, which acts as the Nucleophile. DUMP contacts are provided by residues 166-169, asparagine 177, and 207-209; these read RSVD and HLY. Aspartate 169 contacts (6R)-5,10-methylene-5,6,7,8-tetrahydrofolate. Residue serine 263 participates in (6R)-5,10-methylene-5,6,7,8-tetrahydrofolate binding.

It belongs to the thymidylate synthase family. Bacterial-type ThyA subfamily. In terms of assembly, homodimer.

The protein resides in the cytoplasm. The enzyme catalyses dUMP + (6R)-5,10-methylene-5,6,7,8-tetrahydrofolate = 7,8-dihydrofolate + dTMP. It participates in pyrimidine metabolism; dTTP biosynthesis. In terms of biological role, catalyzes the reductive methylation of 2'-deoxyuridine-5'-monophosphate (dUMP) to 2'-deoxythymidine-5'-monophosphate (dTMP) while utilizing 5,10-methylenetetrahydrofolate (mTHF) as the methyl donor and reductant in the reaction, yielding dihydrofolate (DHF) as a by-product. This enzymatic reaction provides an intracellular de novo source of dTMP, an essential precursor for DNA biosynthesis. The polypeptide is Thymidylate synthase (Anoxybacillus flavithermus (strain DSM 21510 / WK1)).